Consider the following 159-residue polypeptide: Large ribosomal subunit protein uL15 (159 aa).

A compositionally biased stretch (basic and acidic residues) spans 1 to 18 (MKLNEIKDNEGSSKDRIR). Positions 1–39 (MKLNEIKDNEGSSKDRIRVGRGIGSGKGKTGGRGVKGQK) are disordered. Over residues 21–35 (RGIGSGKGKTGGRGV) the composition is skewed to gly residues.

It belongs to the universal ribosomal protein uL15 family. As to quaternary structure, part of the 50S ribosomal subunit.

Binds to the 23S rRNA. This Allorhizobium ampelinum (strain ATCC BAA-846 / DSM 112012 / S4) (Agrobacterium vitis (strain S4)) protein is Large ribosomal subunit protein uL15.